Reading from the N-terminus, the 104-residue chain is Nucleoid-associated protein Bsph_0039 (104 aa).

A compositionally biased stretch (low complexity) spans 1–12 (MRGMGNMQGMMK). The segment at 1–22 (MRGMGNMQGMMKKMQKMQKEMM) is disordered.

It belongs to the YbaB/EbfC family. As to quaternary structure, homodimer.

The protein localises to the cytoplasm. The protein resides in the nucleoid. Functionally, binds to DNA and alters its conformation. May be involved in regulation of gene expression, nucleoid organization and DNA protection. The sequence is that of Nucleoid-associated protein Bsph_0039 from Lysinibacillus sphaericus (strain C3-41).